Consider the following 336-residue polypeptide: 4-hydroxy-2-oxovalerate aldolase (336 aa).

One can recognise a Pyruvate carboxyltransferase domain in the interval 4–254; that stretch reads PRLTDTTLRD…NPGLDVLALM (251 aa). 12–13 lines the substrate pocket; it reads RD. Asp13 provides a ligand contact to Mn(2+). The active-site Proton acceptor is His16. Substrate is bound by residues Ser166 and His193. The Mn(2+) site is built by His193 and His195. Tyr284 contacts substrate.

Belongs to the 4-hydroxy-2-oxovalerate aldolase family.

The enzyme catalyses (S)-4-hydroxy-2-oxopentanoate = acetaldehyde + pyruvate. This Roseiflexus castenholzii (strain DSM 13941 / HLO8) protein is 4-hydroxy-2-oxovalerate aldolase.